The chain runs to 82 residues: Large ribosomal subunit protein bL27 (82 aa).

The interval 1-54 (MAHKKGQGASRNGRDSESKRLGMKVGAGQRVSTGSILVRQRGTKWHPSQNVGRG) is disordered.

Belongs to the bacterial ribosomal protein bL27 family.

The chain is Large ribosomal subunit protein bL27 from Chlamydia caviae (strain ATCC VR-813 / DSM 19441 / 03DC25 / GPIC) (Chlamydophila caviae).